The sequence spans 363 residues: Spore germination protein YndE (363 aa).

10 consecutive transmembrane segments (helical) span residues 8-28, 41-61, 84-104, 113-133, 149-169, 189-209, 218-238, 273-293, 305-325, and 335-355; these read ITTA…GVLT, DGWI…MIIA, LGHL…AFEV, FFLL…WIGL, MIFP…LGIF, VKTT…VAFM, AVVI…IMVI, FLLV…FYAA, PLSC…MPKN, and TVSH…LVIS.

The protein belongs to the amino acid-polyamine-organocation (APC) superfamily. Spore germination protein (SGP) (TC 2.A.3.9) family.

It localises to the cell membrane. In terms of biological role, involved in the germinative response to L-alanine. Could be an amino acid transporter. The sequence is that of Spore germination protein YndE (yndE) from Bacillus subtilis (strain 168).